The chain runs to 308 residues: Mitochondrial import receptor subunit TOM40B (308 aa).

Residues 1–29 form a disordered region; it reads MGNTLGLAPMGALPRRSPRREEPLPNPGS. The required for mitochondrial targeting stretch occupies residues 281 to 308; the sequence is PLPVTLALGAFLNHWRNRFHCGFSITVG.

Belongs to the Tom40 family. In terms of assembly, forms part of the preprotein translocase of the outer mitochondrial membrane (TOM complex) containing TOMM22, TOMM40, TOMM40L and TOMM70. Interacts with mitochondrial targeting sequences.

It is found in the mitochondrion outer membrane. Functionally, potential channel-forming protein implicated in import of protein precursors into mitochondria. The polypeptide is Mitochondrial import receptor subunit TOM40B (Bos taurus (Bovine)).